A 161-amino-acid polypeptide reads, in one-letter code: Cytochrome c-type biogenesis protein CcmE (161 aa).

Over 1 to 8 (MNPRRQKR) the chain is Cytoplasmic. The chain crosses the membrane as a helical; Signal-anchor for type II membrane protein span at residues 9–29 (LGIILAILIGVSATIGLMIYA). The Periplasmic portion of the chain corresponds to 30-161 (LNQNMDLFYT…SEEQKQGSGQ (132 aa)). Heme-binding residues include His129 and Tyr133.

It belongs to the CcmE/CycJ family.

The protein localises to the cell inner membrane. Its function is as follows. Heme chaperone required for the biogenesis of c-type cytochromes. Transiently binds heme delivered by CcmC and transfers the heme to apo-cytochromes in a process facilitated by CcmF and CcmH. This is Cytochrome c-type biogenesis protein CcmE from Vibrio vulnificus (strain CMCP6).